The chain runs to 682 residues: uncharacterized protein (682 aa).

An MCM domain is found at 284 to 487 (VVNILADRLI…KDKDIAEYIV (204 aa)). 329–336 (TDPGIGKT) contributes to the ATP binding site.

This sequence belongs to the MCM family.

This is an uncharacterized protein from Methanocaldococcus jannaschii (strain ATCC 43067 / DSM 2661 / JAL-1 / JCM 10045 / NBRC 100440) (Methanococcus jannaschii).